We begin with the raw amino-acid sequence, 294 residues long: Fatty acyl-CoA reductase Rv0547c (294 aa).

NADP(+) contacts are provided by S49, S50, I52, R72, D97, L98, N124, Y192, K196, V225, and T227. Y192 acts as the Proton acceptor in catalysis.

Belongs to the short-chain dehydrogenases/reductases (SDR) family.

It localises to the host mitochondrion. It catalyses the reaction hexadecanal + NADP(+) + CoA = hexadecanoyl-CoA + NADPH + H(+). In terms of biological role, oxidoreductase that promotes the persistence of M.tuberculosis in host macrophages by reprogramming the fatty acid metabolism in host mitochondria. When localized in the host mitochondria, it potentially acts on unknown lipid substrates and converts them into products that directly or indirectly alter the lipid profile of the mitochondria. This change in lipid profile results in increased mitochondrial membrane fluidity, enhanced endogenous fatty acid oxidation and increased mitochondrial spare respiratory capacity. All these events eventually favor M.tuberculosis persistence in the host macrophages. In vitro, can catalyze the NADPH-dependent reduction of palmitoyl-CoA (hexadecanoyl-CoA). The protein is Fatty acyl-CoA reductase Rv0547c of Mycobacterium tuberculosis (strain ATCC 25618 / H37Rv).